Here is a 141-residue protein sequence, read N- to C-terminus: Large ribosomal subunit protein uL11 (141 aa).

It belongs to the universal ribosomal protein uL11 family. Part of the ribosomal stalk of the 50S ribosomal subunit. Interacts with L10 and the large rRNA to form the base of the stalk. L10 forms an elongated spine to which L12 dimers bind in a sequential fashion forming a multimeric L10(L12)X complex. Post-translationally, one or more lysine residues are methylated.

Forms part of the ribosomal stalk which helps the ribosome interact with GTP-bound translation factors. In Exiguobacterium sibiricum (strain DSM 17290 / CCUG 55495 / CIP 109462 / JCM 13490 / 255-15), this protein is Large ribosomal subunit protein uL11.